The following is a 547-amino-acid chain: Glucose-6-phosphate isomerase (547 aa).

Glutamate 353 acts as the Proton donor in catalysis. Residues histidine 384 and lysine 512 contribute to the active site.

This sequence belongs to the GPI family.

The protein localises to the cytoplasm. It carries out the reaction alpha-D-glucose 6-phosphate = beta-D-fructose 6-phosphate. Its pathway is carbohydrate biosynthesis; gluconeogenesis. The protein operates within carbohydrate degradation; glycolysis; D-glyceraldehyde 3-phosphate and glycerone phosphate from D-glucose: step 2/4. Its function is as follows. Catalyzes the reversible isomerization of glucose-6-phosphate to fructose-6-phosphate. In Pseudoalteromonas atlantica (strain T6c / ATCC BAA-1087), this protein is Glucose-6-phosphate isomerase.